The chain runs to 356 residues: MAGLKLQAVTKSWDGKTQVIKPLTLDVADGEFIVMVGPSGCGKSTLLRMVAGLERVTTGDIWIDRKRVTEMEPKDRGIAMVFQNYALYPHMSVEENMAWGLKIRGMGKQQIAERVKEAARILELDGLLKRRPRELSGGQRQRVAMGRAIVREPAVFLFDEPLSNLDAKLRVQMRLELQQLHRRLKTTSLYVTHDQVEAMTLAQRVMVMNGGVAEQIGTPVEVYEKPASLFVASFIGSPAMNLLAGRVNNEGTHFELDGGITLLLNGGYRQYAGRKMTLGIRPEHIALSSRAEGGVPLVMDTLEILGADNLAHGRWGEQKLVVRLAHQERPTAGSTLWLHLPENQLHLFDGETGQRV.

Residues 4 to 235 (LKLQAVTKSW…PASLFVASFI (232 aa)) form the ABC transporter domain. 37–44 (GPSGCGKS) is a binding site for ATP.

It belongs to the ABC transporter superfamily. sn-glycerol-3-phosphate importer (TC 3.A.1.1.3) family. As to quaternary structure, the complex is composed of two ATP-binding proteins (UgpC), two transmembrane proteins (UgpA and UgpE) and a solute-binding protein (UgpB).

The protein localises to the cell inner membrane. The catalysed reaction is sn-glycerol 3-phosphate(out) + ATP + H2O = sn-glycerol 3-phosphate(in) + ADP + phosphate + H(+). Functionally, part of the ABC transporter complex UgpBAEC involved in sn-glycerol-3-phosphate (G3P) import. Responsible for energy coupling to the transport system. This Escherichia coli O6:K15:H31 (strain 536 / UPEC) protein is sn-glycerol-3-phosphate import ATP-binding protein UgpC.